The chain runs to 82 residues: Small ribosomal subunit protein bS16 (82 aa).

This sequence belongs to the bacterial ribosomal protein bS16 family.

This is Small ribosomal subunit protein bS16 from Dehalococcoides mccartyi (strain ATCC BAA-2100 / JCM 16839 / KCTC 5957 / BAV1).